A 158-amino-acid polypeptide reads, in one-letter code: MSETMQSLDQLSALKTTQPDAPTYTKKVDKQGRAYATGKRKDAVARVWIKPGAGKVTVNAREVEVYFARPVLRMMIQQPLVAAARAGQYDVICTVAGGGLSGQAGAVRHGISKALTNFEPELRGVLKKGGFLTRDSRVVERKKYGKAKARRSFQFSKR.

Over residues 1–20 the composition is skewed to polar residues; that stretch reads MSETMQSLDQLSALKTTQPD. A disordered region spans residues 1-29; it reads MSETMQSLDQLSALKTTQPDAPTYTKKVD.

Belongs to the universal ribosomal protein uS9 family.

The polypeptide is Small ribosomal subunit protein uS9 (Rhodopseudomonas palustris (strain BisB5)).